The primary structure comprises 535 residues: CTP synthase (535 aa).

Residues 1–267 (MTKYIFVTGG…DQIVCDHLKL (267 aa)) are amidoligase domain. Ser13 serves as a coordination point for CTP. Ser13 is a UTP binding site. 14-19 (SLGKGI) lines the ATP pocket. Tyr54 is an L-glutamine binding site. Position 71 (Asp71) interacts with ATP. Mg(2+) is bound by residues Asp71 and Glu141. Residues 148–150 (DIE), 188–193 (KTKPTQ), and Lys224 each bind CTP. Residues 188–193 (KTKPTQ) and Lys224 each bind UTP. 240 to 242 (RDA) contributes to the ATP binding site. The Glutamine amidotransferase type-1 domain occupies 292–534 (KIALVGKYVE…VRASITNKES (243 aa)). Gly354 is a binding site for L-glutamine. Cys381 serves as the catalytic Nucleophile; for glutamine hydrolysis. Residues 382–385 (LGMQ), Glu405, and Arg462 contribute to the L-glutamine site. Active-site residues include His507 and Glu509.

It belongs to the CTP synthase family. In terms of assembly, homotetramer.

It catalyses the reaction UTP + L-glutamine + ATP + H2O = CTP + L-glutamate + ADP + phosphate + 2 H(+). It carries out the reaction L-glutamine + H2O = L-glutamate + NH4(+). The catalysed reaction is UTP + NH4(+) + ATP = CTP + ADP + phosphate + 2 H(+). Its pathway is pyrimidine metabolism; CTP biosynthesis via de novo pathway; CTP from UDP: step 2/2. With respect to regulation, allosterically activated by GTP, when glutamine is the substrate; GTP has no effect on the reaction when ammonia is the substrate. The allosteric effector GTP functions by stabilizing the protein conformation that binds the tetrahedral intermediate(s) formed during glutamine hydrolysis. Inhibited by the product CTP, via allosteric rather than competitive inhibition. In terms of biological role, catalyzes the ATP-dependent amination of UTP to CTP with either L-glutamine or ammonia as the source of nitrogen. Regulates intracellular CTP levels through interactions with the four ribonucleotide triphosphates. The polypeptide is CTP synthase (Bacillus cereus (strain ATCC 10987 / NRS 248)).